The primary structure comprises 257 residues: Pimeloyl-[acyl-carrier protein] methyl ester esterase (257 aa).

Residues 15–241 (HLVLLHGWGL…KAAHAPFVSH (227 aa)) enclose the AB hydrolase-1 domain. Residues W22, 82-83 (SL), and 143-147 (FLALQ) each bind substrate. S82 serves as the catalytic Nucleophile. Active-site residues include D207 and H235. Residue H235 participates in substrate binding.

This sequence belongs to the AB hydrolase superfamily. Carboxylesterase BioH family. As to quaternary structure, monomer.

The protein localises to the cytoplasm. The catalysed reaction is 6-carboxyhexanoyl-[ACP] methyl ester + H2O = 6-carboxyhexanoyl-[ACP] + methanol + H(+). The protein operates within cofactor biosynthesis; biotin biosynthesis. In terms of biological role, the physiological role of BioH is to remove the methyl group introduced by BioC when the pimeloyl moiety is complete. It allows to synthesize pimeloyl-ACP via the fatty acid synthetic pathway through the hydrolysis of the ester bonds of pimeloyl-ACP esters. The polypeptide is Pimeloyl-[acyl-carrier protein] methyl ester esterase (Klebsiella pneumoniae (strain 342)).